A 1370-amino-acid chain; its full sequence is DNA-directed RNA polymerase subunit beta (1370 aa).

It belongs to the RNA polymerase beta chain family. The RNAP catalytic core consists of 2 alpha, 1 beta, 1 beta' and 1 omega subunit. When a sigma factor is associated with the core the holoenzyme is formed, which can initiate transcription.

The enzyme catalyses RNA(n) + a ribonucleoside 5'-triphosphate = RNA(n+1) + diphosphate. DNA-dependent RNA polymerase catalyzes the transcription of DNA into RNA using the four ribonucleoside triphosphates as substrates. This is DNA-directed RNA polymerase subunit beta from Bordetella avium (strain 197N).